Reading from the N-terminus, the 200-residue chain is dTDP-4-dehydrorhamnose 3,5-epimerase (200 aa).

Substrate contacts are provided by residues Arg-21, Glu-26, 45–47 (QVN), and Arg-57. Catalysis depends on His-60, which acts as the Proton acceptor. Substrate contacts are provided by Lys-70 and His-116. Tyr-129 serves as the catalytic Proton donor. 2 residues coordinate substrate: Glu-140 and Lys-165.

This sequence belongs to the dTDP-4-dehydrorhamnose 3,5-epimerase family.

It catalyses the reaction dTDP-4-dehydro-6-deoxy-alpha-D-glucose = dTDP-4-dehydro-beta-L-rhamnose. It participates in carbohydrate biosynthesis; dTDP-L-rhamnose biosynthesis. Its pathway is antibiotic biosynthesis; streptomycin biosynthesis. Functionally, involved in the biosynthesis of the dihydrostreptose moiety of streptomycin. Catalyzes the epimerization of the C3' and C5'positions of dTDP-6-deoxy-D-xylo-4-hexulose, forming dTDP-6-deoxy-L-lyxo-4-hexulose. This chain is dTDP-4-dehydrorhamnose 3,5-epimerase, found in Streptomyces griseus.